A 953-amino-acid chain; its full sequence is Valine--tRNA ligase (953 aa).

The 'HIGH' region motif lies at 42–52; that stretch reads PNVTGSLHMGH. The 'KMSKS' region signature appears at 554–558; it reads KMSKS. Lys557 serves as a coordination point for ATP. Residues 884–953 adopt a coiled-coil conformation; the sequence is LIDKDAELAR…EAQKETIAAL (70 aa).

It belongs to the class-I aminoacyl-tRNA synthetase family. ValS type 1 subfamily. In terms of assembly, monomer.

It is found in the cytoplasm. The catalysed reaction is tRNA(Val) + L-valine + ATP = L-valyl-tRNA(Val) + AMP + diphosphate. In terms of biological role, catalyzes the attachment of valine to tRNA(Val). As ValRS can inadvertently accommodate and process structurally similar amino acids such as threonine, to avoid such errors, it has a 'posttransfer' editing activity that hydrolyzes mischarged Thr-tRNA(Val) in a tRNA-dependent manner. The chain is Valine--tRNA ligase from Photobacterium profundum (strain SS9).